The following is a 390-amino-acid chain: Putative transposase y4qE (390 aa).

Belongs to the transposase IS1111A/IS1328/IS1533 family.

This chain is Putative transposase y4qE, found in Sinorhizobium fredii (strain NBRC 101917 / NGR234).